A 440-amino-acid chain; its full sequence is GTPase Der (440 aa).

2 consecutive EngA-type G domains span residues 4–168 (PVVA…PPEK) and 177–352 (IKIA…GRHS). GTP is bound by residues 10 to 17 (GRPNVGKS), 57 to 61 (DTGGL), 120 to 123 (NKVE), 183 to 190 (GRPNVGKS), 230 to 234 (DTAGM), and 295 to 298 (NKWD). Residues 353–437 (MRISTPGLNA…PIRFVLRKKT (85 aa)) form the KH-like domain.

This sequence belongs to the TRAFAC class TrmE-Era-EngA-EngB-Septin-like GTPase superfamily. EngA (Der) GTPase family. Associates with the 50S ribosomal subunit.

GTPase that plays an essential role in the late steps of ribosome biogenesis. The protein is GTPase Der of Pelotomaculum thermopropionicum (strain DSM 13744 / JCM 10971 / SI).